We begin with the raw amino-acid sequence, 230 residues long: Ureidoacrylate amidohydrolase RutB (230 aa).

Aspartate 24 serves as the catalytic Proton acceptor. Lysine 133 is a catalytic residue. Cysteine 166 acts as the Nucleophile in catalysis.

The protein belongs to the isochorismatase family. RutB subfamily.

The catalysed reaction is (Z)-3-ureidoacrylate + H2O + H(+) = (Z)-3-aminoacrylate + NH4(+) + CO2. It catalyses the reaction (Z)-3-ureidoacrylate + H2O = (Z)-3-aminoacrylate + carbamate + H(+). It carries out the reaction (Z)-2-methylureidoacrylate + H2O + H(+) = (Z)-2-methylaminoacrylate + NH4(+) + CO2. Its function is as follows. Hydrolyzes ureidoacrylate to form aminoacrylate and carbamate. The carbamate hydrolyzes spontaneously, thereby releasing one of the nitrogen atoms of the pyrimidine ring as ammonia and one of its carbon atoms as CO2. This is Ureidoacrylate amidohydrolase RutB from Escherichia coli (strain K12 / MC4100 / BW2952).